A 316-amino-acid chain; its full sequence is Chitin synthase export chaperone (316 aa).

7 helical membrane-spanning segments follow: residues Val-62 to Ile-82, Leu-99 to Val-119, Phe-130 to Phe-150, Thr-170 to Ile-190, Ala-200 to Ile-220, Leu-233 to Val-253, and His-266 to Tyr-286.

This sequence belongs to the CHS7 family. As to quaternary structure, interacts with CHS3.

It localises to the endoplasmic reticulum membrane. Its function is as follows. Chaperone required for the export of the chitin synthase CHS3 from the endoplasmic reticulum. The chain is Chitin synthase export chaperone (CHS7) from Saccharomyces cerevisiae (strain ATCC 204508 / S288c) (Baker's yeast).